Here is an 851-residue protein sequence, read N- to C-terminus: Transcriptional regulator RFX1 (851 aa).

Polar residues-rich tracts occupy residues Met1–Asn11 and Pro20–Pro34. Disordered regions lie at residues Met1 to Pro121, Gln134 to Tyr170, and His195 to Asn230. Residues Gln38–Gln53 show a composition bias toward basic and acidic residues. Residues Gln54 to Ser84 show a composition bias toward low complexity. Residues Lys85–Pro114 show a composition bias toward polar residues. The segment covering Tyr141–Tyr170 has biased composition (low complexity). A compositionally biased stretch (polar residues) spans Ser199–Pro211. The segment at residues Gly282–Gly357 is a DNA-binding region (RFX-type winged-helix). Disordered regions lie at residues Tyr368 to Tyr411 and Pro783 to Gln806. Residues Ala384–Ala393 are compositionally biased toward polar residues. Positions Pro783 to Pro797 are enriched in low complexity.

The protein belongs to the RFX family.

The protein resides in the nucleus. In terms of biological role, transcription factor involved in DNA damage responses, morphogenesis, and virulence. This is Transcriptional regulator RFX1 (RFX1) from Candida albicans (strain SC5314 / ATCC MYA-2876) (Yeast).